The chain runs to 1414 residues: Calcium-transporting ATPase 2 (1414 aa).

Disordered stretches follow at residues 1–231 and 265–294; these read MSRN…PSRL and AVGT…QWRA. The Cytoplasmic portion of the chain corresponds to 1 to 327; sequence MSRNNPPPVI…LLMWLAFKDK (327 aa). 2 stretches are compositionally biased toward low complexity: residues 33–53 and 75–96; these read PTPT…PESP and SPTP…SSSS. Residues 179–189 are compositionally biased toward basic and acidic residues; sequence DGDRGEDDANK. Over residues 190 to 201 the composition is skewed to basic residues; that stretch reads KGKKDKKGKKGK. The segment covering 202–229 has biased composition (basic and acidic residues); sequence KDKEEPPSAHLDPDKDKTDPTPFREKPS. Residues 328 to 348 traverse the membrane as a helical segment; it reads VLILLSVAAVVSLALGLYQDL. Topologically, residues 349-370 are vacuolar; the sequence is GTPPKIIYNDECPDGCEEAQVD. A helical membrane pass occupies residues 371 to 391; it reads WVEGVAIVVAIIIVVLVGSIN. Residues 392–541 are Cytoplasmic-facing; it reads DWQKERQFKK…TPLQIKLNHL (150 aa). Residues 542–562 traverse the membrane as a helical segment; sequence AELIAKLGGASGLLLFIALMI. At 563 to 585 the chain is on the vacuolar side; that stretch reads RFFVQLKTNPDRSANDKAQSFIQ. Residues 586 to 606 traverse the membrane as a helical segment; the sequence is ILIIAVTLVVVAVPEGLPLAV. Positions 595 and 600 each coordinate Ca(2+). The Cytoplasmic portion of the chain corresponds to 607-1040; sequence TLALAFATKR…GRCVNDSVKK (434 aa). The 4-aspartylphosphate intermediate role is filled by D642. Residues D642 and T644 each contribute to the Mg(2+) site. Residues T644, E737, R779, 909–911, R958, and K964 contribute to the ATP site; that span reads TGD. D983 is a binding site for Mg(2+). Residue N986 participates in ATP binding. A helical transmembrane segment spans residues 1041–1061; it reads FLQFQISVNITAVFITFISAV. N1049 contacts Ca(2+). Residues 1062-1068 are Vacuolar-facing; that stretch reads ASSSEES. A helical transmembrane segment spans residues 1069-1089; sequence VLTAVQLLWVNLIMDTFAALA. Ca(2+) is bound by residues N1079 and D1083. Over 1090–1118 the chain is Cytoplasmic; that stretch reads LATDPATESSLDRKPDRKNAPLITVEMFK. The helical transmembrane segment at 1119-1139 threads the bilayer; it reads MIMVQAIYQIIVCLVLHFAGL. The Vacuolar segment spans residues 1140–1153; the sequence is KILGLEDNDQNNTE. A helical transmembrane segment spans residues 1154–1171; the sequence is LGALVFNCFVFCQIFNQL. At 1172–1191 the chain is on the cytoplasmic side; sequence NCRRLDRKLNVLEGFWRNWY. A helical transmembrane segment spans residues 1192–1212; that stretch reads FIIIFLIMVGGQILIVEVGGA. E1208 serves as a coordination point for Ca(2+). Topologically, residues 1213 to 1223 are vacuolar; it reads AFQVTRLGGRD. The chain crosses the membrane as a helical span at residues 1224–1244; it reads WGITLVIGALSLPIGALVRLT. At 1245 to 1414 the chain is on the cytoplasmic side; that stretch reads PTGPFARLLV…GLSSGDANNV (170 aa). Residues 1376–1414 form a disordered region; it reads PRTNPDDPLYAKFGLQPPESRGSSVSGAEGLSSGDANNV.

This sequence belongs to the cation transport ATPase (P-type) (TC 3.A.3) family.

The protein localises to the vacuole membrane. The enzyme catalyses Ca(2+)(in) + ATP + H2O = Ca(2+)(out) + ADP + phosphate + H(+). In terms of biological role, this magnesium-dependent enzyme catalyzes the hydrolysis of ATP coupled with the transport of calcium. Transports calcium to the vacuole and participates in the control of cytosolic free calcium. The sequence is that of Calcium-transporting ATPase 2 from Cryptococcus neoformans var. grubii serotype A (strain H99 / ATCC 208821 / CBS 10515 / FGSC 9487) (Filobasidiella neoformans var. grubii).